The following is a 217-amino-acid chain: Imidazole glycerol phosphate synthase subunit HisH (217 aa).

The Glutamine amidotransferase type-1 domain occupies 6-214 (QIAVVDYDMG…VTQVAAAQLQ (209 aa)). Cysteine 84 (nucleophile) is an active-site residue. Residues histidine 189 and glutamate 191 contribute to the active site.

In terms of assembly, heterodimer of HisH and HisF.

The protein localises to the cytoplasm. It catalyses the reaction 5-[(5-phospho-1-deoxy-D-ribulos-1-ylimino)methylamino]-1-(5-phospho-beta-D-ribosyl)imidazole-4-carboxamide + L-glutamine = D-erythro-1-(imidazol-4-yl)glycerol 3-phosphate + 5-amino-1-(5-phospho-beta-D-ribosyl)imidazole-4-carboxamide + L-glutamate + H(+). It carries out the reaction L-glutamine + H2O = L-glutamate + NH4(+). It functions in the pathway amino-acid biosynthesis; L-histidine biosynthesis; L-histidine from 5-phospho-alpha-D-ribose 1-diphosphate: step 5/9. In terms of biological role, IGPS catalyzes the conversion of PRFAR and glutamine to IGP, AICAR and glutamate. The HisH subunit catalyzes the hydrolysis of glutamine to glutamate and ammonia as part of the synthesis of IGP and AICAR. The resulting ammonia molecule is channeled to the active site of HisF. The protein is Imidazole glycerol phosphate synthase subunit HisH of Synechococcus sp. (strain ATCC 27144 / PCC 6301 / SAUG 1402/1) (Anacystis nidulans).